Reading from the N-terminus, the 63-residue chain is Conotoxin LeDr243 (63 aa).

The first 22 residues, 1–22 (MRCLPVFVILLLLIASTPSIDA), serve as a signal peptide directing secretion. A propeptide spanning residues 23–47 (RPKTKDDMPLASFNDNAKRILQILS) is cleaved from the precursor. Cysteine 60 carries the post-translational modification Cysteine amide. Residues 62–63 (LG) constitute a propeptide that is removed on maturation.

The protein belongs to the conotoxin T superfamily. Post-translationally, contains 2 disulfide bonds that can be either 'C1-C3, C2-C4' or 'C1-C4, C2-C3', since these disulfide connectivities have been observed for conotoxins with cysteine framework V (for examples, see AC P0DQQ7 and AC P81755). In terms of tissue distribution, expressed by the venom duct.

The protein localises to the secreted. In Conus litteratus (Lettered cone), this protein is Conotoxin LeDr243.